A 33-amino-acid polypeptide reads, in one-letter code: GLLDSLKNLAINAAKGAGQSVLNTLSCKLSKTC.

The cysteines at positions 27 and 33 are disulfide-linked.

Expressed by the skin glands.

It localises to the secreted. Has antibacterial activity against the Gram-positive bacterium S.aureus ATCC 25923 (MIC=18 uM) and the Gram-negative bacterium E.coli ATCC 25726 (MIC=36 uM). In Odorrana hosii (Hose's rock frog), this protein is Brevinin-2HSa.